We begin with the raw amino-acid sequence, 213 residues long: Ribonuclease HII (213 aa).

Residues 20–209 (ELVAGVDEVG…VRQAYEALEG (190 aa)) enclose the RNase H type-2 domain. 3 residues coordinate a divalent metal cation: Asp-26, Glu-27, and Asp-118.

It belongs to the RNase HII family. Requires Mn(2+) as cofactor. Mg(2+) is required as a cofactor.

The protein localises to the cytoplasm. The enzyme catalyses Endonucleolytic cleavage to 5'-phosphomonoester.. Its function is as follows. Endonuclease that specifically degrades the RNA of RNA-DNA hybrids. This Pseudomonas fluorescens (strain Pf0-1) protein is Ribonuclease HII.